Consider the following 419-residue polypeptide: MELKVWVDGVQRIVCGVTEVTTCQEVVIALAQAIGRTGRYTLIEKWRDTERHLAPHENPIVSLNKWGQYASDVQLILRRTGPSLSERPTSDSVARIPERTLYRQSLPPLAKLRPQADKSIRRREPKRKSLTFTGGAKGLTDIFGKGKETEFRQKVLSNCRATAEELKRLIRLQTGKLQAIEKQLESSEAEIRFWEQKYSCSLEEEIVRLEQRIKRNDVEIEEEEFWENELQIEQENEKQLQDQLEEIRQKVTDCEGRLKDYLAQIHTMESGLQAEKLHREVQEAQVNEEEVKGKIEKVKGEMDLQGQQSLRLENGIRAVERSLGQATKRLQDKEQELEQLTKELRQVNLQQFIQQTGTKVTVLPAEPTEIEASQADIETEAPFQSGSLKRPGSSRQLPSNLRILQNPVSSGFNPEGIYV.

A Ras-associating domain is found at 1 to 82 (MELKVWVDGV…VQLILRRTGP (82 aa)). Residues S105 and S129 each carry the phosphoserine modification. T131 carries the post-translational modification Phosphothreonine. Positions 372–399 (ASQADIETEAPFQSGSLKRPGSSRQLPS) are disordered. Polar residues predominate over residues 382–399 (PFQSGSLKRPGSSRQLPS). Residue S387 is modified to Phosphoserine.

The sequence is that of Ras association domain-containing protein 8 (Rassf8) from Mus musculus (Mouse).